A 95-amino-acid polypeptide reads, in one-letter code: Blastocyst protein 4 (95 aa).

Positions 1–20 are cleaved as a signal peptide; it reads MGAVFAIIGGFALDSPILRL.

In Oryctolagus cuniculus (Rabbit), this protein is Blastocyst protein 4.